The chain runs to 192 residues: Ribosome maturation factor RimM (192 aa).

One can recognise a PRC barrel domain in the interval 97-172 (EDEYYLADLI…VVLADPPALV (76 aa)). Residues 168-192 (PPALVGEPEGPESPAEDDDGERHYD) form a disordered region.

Belongs to the RimM family. Binds ribosomal protein uS19.

It is found in the cytoplasm. In terms of biological role, an accessory protein needed during the final step in the assembly of 30S ribosomal subunit, possibly for assembly of the head region. Essential for efficient processing of 16S rRNA. May be needed both before and after RbfA during the maturation of 16S rRNA. It has affinity for free ribosomal 30S subunits but not for 70S ribosomes. The polypeptide is Ribosome maturation factor RimM (Caulobacter sp. (strain K31)).